Reading from the N-terminus, the 336-residue chain is D-alanine--D-alanine ligase (336 aa).

Residues 124 to 330 enclose the ATP-grasp domain; sequence KMWFSALGIP…FATFLEQAIL (207 aa). 154–209 is an ATP binding site; the sequence is AFDEWGSVFIKAASQGSSVGCFPAHRREDIPGLVRKAFEYAPFVVVEKTIKARELE. Mg(2+) contacts are provided by Asp-284, Glu-297, and Asn-299.

It belongs to the D-alanine--D-alanine ligase family. Mg(2+) is required as a cofactor. Requires Mn(2+) as cofactor.

It localises to the cytoplasm. The enzyme catalyses 2 D-alanine + ATP = D-alanyl-D-alanine + ADP + phosphate + H(+). The protein operates within cell wall biogenesis; peptidoglycan biosynthesis. Functionally, cell wall formation. In Shewanella amazonensis (strain ATCC BAA-1098 / SB2B), this protein is D-alanine--D-alanine ligase.